A 262-amino-acid polypeptide reads, in one-letter code: Small ribosomal subunit protein uS3 (262 aa).

Residues 38–106 (LRKIIAKELE…KVKLNIQEIH (69 aa)) form the KH type-2 domain. Positions 211–262 (KGQTQLPQPAVAAARPGLTVEEEERPQRKGGRGGRGANAGAARGGRGGRSRS) are disordered. The segment covering 243–255 (GGRGANAGAARGG) has biased composition (gly residues).

Belongs to the universal ribosomal protein uS3 family. In terms of assembly, part of the 30S ribosomal subunit. Forms a tight complex with proteins S10 and S14.

Its function is as follows. Binds the lower part of the 30S subunit head. Binds mRNA in the 70S ribosome, positioning it for translation. This chain is Small ribosomal subunit protein uS3, found in Roseiflexus sp. (strain RS-1).